The primary structure comprises 533 residues: Flavin-dependent halogenase armH4 (533 aa).

FAD-binding residues include Gly-16, Ala-19, and Glu-49. 2 residues coordinate chloride: Ser-337 and Gly-338. FAD is bound at residue Val-339.

The protein belongs to the flavin-dependent halogenase family.

It carries out the reaction melleolide F + FADH2 + chloride + O2 = 6'-chloromelleolide F + FAD + 2 H2O + H(+). It catalyses the reaction melleolide F + bromide + FADH2 + O2 = 6'-bromomelleolide F + FAD + 2 H2O. Functionally, flavin-dependent halogenase involved in the biosynthesis of melleolides, a range of antifungal and phytotoxic polyketide derivatives composed of an orsellinic acid (OA) moiety esterified to various sesquiterpene alcohols. The halogenase catalyzes the transfer of a single chlorine atom to the melleolide backbone, resulting in a 6'-chloromelleolide product. The enzyme acts on free substrate and does not depend on carrier-protein-dependent acceptor molecules. Can also catalyze the transfer of a single bromine atom to the melleolide backbone in vitro. This Armillaria mellea (Honey mushroom) protein is Flavin-dependent halogenase armH4.